The following is a 270-amino-acid chain: Small ribosomal subunit protein bS1m (270 aa).

The tract at residues 218–250 is disordered; it reads TKQGFKHLGPKPLAYTEKKRETTKQSTKNNVFQ.

The protein belongs to the bacterial ribosomal protein bS1 family.

Its subcellular location is the mitochondrion. The polypeptide is Small ribosomal subunit protein bS1m (RPS1) (Marchantia polymorpha (Common liverwort)).